The primary structure comprises 617 residues: NADPH-dependent diflavin oxidoreductase 1 (617 aa).

One can recognise a Flavodoxin-like domain in the interval 3 to 147 (PMILYASETG…AFLPWLQQTL (145 aa)). FMN is bound by residues 9–14 (SETGNA), 56–59 (STHG), 94–103 (LGDSSYERFC), and E129. The region spanning 226-465 (DDWVWATLKK…HIASPTLFLP (240 aa)) is the FAD-binding FR-type domain. FAD-binding positions include 404-407 (RQFS) and 438-441 (GLCS). NADP(+) contacts are provided by residues T479, 534–535 (SR), and 540–544 (RIYVQ). W617 contributes to the FAD binding site.

This sequence belongs to the NADPH-dependent diflavin oxidoreductase NDOR1 family. The protein in the N-terminal section; belongs to the flavodoxin family. It in the C-terminal section; belongs to the flavoprotein pyridine nucleotide cytochrome reductase family. Interacts with DRE2; as part of the cytosolic iron-sulfur (Fe-S) protein assembly (CIA) machinery. Requires FAD as cofactor. FMN serves as cofactor.

The protein resides in the cytoplasm. It is found in the mitochondrion. The catalysed reaction is 2 oxidized [2Fe-2S]-[protein] + NADPH = 2 reduced [2Fe-2S]-[protein] + NADP(+) + H(+). NADPH-dependent reductase which is a central component of the cytosolic iron-sulfur (Fe-S) protein assembly (CIA) machinery. Transfers electrons from NADPH via its FAD and FMN prosthetic groups to the [2Fe-2S] cluster of DRE2, another key component of the CIA machinery. In turn, this reduced cluster provides electrons for assembly of cytosolic iron-sulfur cluster proteins. Positively controls H(2)O(2)-induced cell death. This is NADPH-dependent diflavin oxidoreductase 1 from Cryptococcus neoformans var. neoformans serotype D (strain B-3501A) (Filobasidiella neoformans).